A 57-amino-acid polypeptide reads, in one-letter code: MLLISKTLFPIPRSAEELWEGTYTLVVAFVLAFLVYSDYLSNLSPFGEILSSPCIST.

The chain crosses the membrane as a helical span at residues 21-37; that stretch reads GTYTLVVAFVLAFLVYS.

It is found in the host membrane. This is an uncharacterized protein from Human herpesvirus 6B (strain Z29) (HHV-6 variant B).